The chain runs to 256 residues: UPF0246 protein Sde_3824 (256 aa).

This sequence belongs to the UPF0246 family.

This is UPF0246 protein Sde_3824 from Saccharophagus degradans (strain 2-40 / ATCC 43961 / DSM 17024).